We begin with the raw amino-acid sequence, 688 residues long: PTS system glucoside-specific EIICBA component (688 aa).

Residues 3–427 (KKLFGQLQRI…FKLKTPGRED (425 aa)) enclose the PTS EIIC type-1 domain. The next 10 membrane-spanning stretches (helical) occupy residues 12 to 32 (IGKALMLPVAILPAAGILLAF), 81 to 101 (LGLAGGDGVAALAALVGYLIM), 137 to 157 (LVLGIPTLQTGVFGGIIMGAL), 182 to 202 (FVPIVTSVVAIATGVVLSFAW), 223 to 243 (LTTFIFGIIERSLIPFGLHHI), 284 to 304 (AFTTGKYPFMMFGLPAAAFAI), 315 to 335 (IVGGLMLSAGLTAFLTGITEP), 340 to 360 (FLFVAPVLYGIHVLLAGTSFL), 364 to 384 (LLGVKIGMTFSGGFIDYILYG), and 395 to 415 (LVIPVGIVYAIVYYFLFDFAI). A PTS EIIB type-1 domain is found at 438 to 519 (AKLPFDVLDA…AKIMSGEITK (82 aa)). The Phosphocysteine intermediate; for EIIB activity role is filled by Cys460. Residues 560 to 664 (DQVFAGKMMG…SIVTPMIITN (105 aa)) enclose the PTS EIIA type-1 domain. The active-site Tele-phosphohistidine intermediate; for EIIA activity is His612.

It is found in the cell membrane. In terms of biological role, the phosphoenolpyruvate-dependent sugar phosphotransferase system (sugar PTS), a major carbohydrate active -transport system, catalyzes the phosphorylation of incoming sugar substrates concomitantly with their translocation across the cell membrane. This system is involved in alpha- and beta-glucoside transport. The protein is PTS system glucoside-specific EIICBA component (glcB) of Staphylococcus aureus (strain MRSA252).